A 398-amino-acid chain; its full sequence is Bifunctional enzyme IspD/IspF (398 aa).

A 2-C-methyl-D-erythritol 4-phosphate cytidylyltransferase region spans residues 1-237; sequence MSISIAAIIL…QKKMQMFPDI (237 aa). Positions 238–398 are 2-C-methyl-D-erythritol 2,4-cyclodiphosphate synthase; sequence RVGNGYDVHS…SVLYPGEIPQ (161 aa). Positions 244 and 246 each coordinate a divalent metal cation. Residues 244 to 246 and 270 to 271 each bind 4-CDP-2-C-methyl-D-erythritol 2-phosphate; these read DVH and HS. Histidine 278 serves as a coordination point for a divalent metal cation. 4-CDP-2-C-methyl-D-erythritol 2-phosphate contacts are provided by residues 292-294, 368-371, phenylalanine 375, and arginine 378; these read DIG and TTNE.

The protein in the N-terminal section; belongs to the IspD/TarI cytidylyltransferase family. IspD subfamily. In the C-terminal section; belongs to the IspF family. A divalent metal cation serves as cofactor.

The enzyme catalyses 2-C-methyl-D-erythritol 4-phosphate + CTP + H(+) = 4-CDP-2-C-methyl-D-erythritol + diphosphate. It carries out the reaction 4-CDP-2-C-methyl-D-erythritol 2-phosphate = 2-C-methyl-D-erythritol 2,4-cyclic diphosphate + CMP. Its pathway is isoprenoid biosynthesis; isopentenyl diphosphate biosynthesis via DXP pathway; isopentenyl diphosphate from 1-deoxy-D-xylulose 5-phosphate: step 2/6. It functions in the pathway isoprenoid biosynthesis; isopentenyl diphosphate biosynthesis via DXP pathway; isopentenyl diphosphate from 1-deoxy-D-xylulose 5-phosphate: step 4/6. Its function is as follows. Bifunctional enzyme that catalyzes the formation of 4-diphosphocytidyl-2-C-methyl-D-erythritol from CTP and 2-C-methyl-D-erythritol 4-phosphate (MEP) (IspD), and catalyzes the conversion of 4-diphosphocytidyl-2-C-methyl-D-erythritol 2-phosphate (CDP-ME2P) to 2-C-methyl-D-erythritol 2,4-cyclodiphosphate (ME-CPP) with a corresponding release of cytidine 5-monophosphate (CMP) (IspF). The protein is Bifunctional enzyme IspD/IspF of Bartonella tribocorum (strain CIP 105476 / IBS 506).